We begin with the raw amino-acid sequence, 364 residues long: Phosphoserine aminotransferase (364 aa).

Arginine 42 is a binding site for L-glutamate. Pyridoxal 5'-phosphate-binding positions include 76 to 77 (GR), tryptophan 102, threonine 156, aspartate 175, and glutamine 198. Lysine 199 is subject to N6-(pyridoxal phosphate)lysine. 240–241 (NT) is a binding site for pyridoxal 5'-phosphate.

Belongs to the class-V pyridoxal-phosphate-dependent aminotransferase family. SerC subfamily. In terms of assembly, homodimer. Pyridoxal 5'-phosphate is required as a cofactor.

The protein localises to the cytoplasm. It catalyses the reaction O-phospho-L-serine + 2-oxoglutarate = 3-phosphooxypyruvate + L-glutamate. The catalysed reaction is 4-(phosphooxy)-L-threonine + 2-oxoglutarate = (R)-3-hydroxy-2-oxo-4-phosphooxybutanoate + L-glutamate. Its pathway is amino-acid biosynthesis; L-serine biosynthesis; L-serine from 3-phospho-D-glycerate: step 2/3. It functions in the pathway cofactor biosynthesis; pyridoxine 5'-phosphate biosynthesis; pyridoxine 5'-phosphate from D-erythrose 4-phosphate: step 3/5. Functionally, catalyzes the reversible conversion of 3-phosphohydroxypyruvate to phosphoserine and of 3-hydroxy-2-oxo-4-phosphonooxybutanoate to phosphohydroxythreonine. This is Phosphoserine aminotransferase from Shewanella woodyi (strain ATCC 51908 / MS32).